The primary structure comprises 402 residues: 1-deoxy-D-xylulose 5-phosphate reductoisomerase (402 aa).

NADPH contacts are provided by threonine 10, glycine 11, serine 12, isoleucine 13, glycine 36, arginine 37, asparagine 38, and asparagine 124. Lysine 125 lines the 1-deoxy-D-xylulose 5-phosphate pocket. Glutamate 126 is a binding site for NADPH. Aspartate 150 serves as a coordination point for Mn(2+). 4 residues coordinate 1-deoxy-D-xylulose 5-phosphate: serine 151, glutamate 152, serine 186, and histidine 209. Glutamate 152 serves as a coordination point for Mn(2+). Glycine 215 is an NADPH binding site. Residues serine 222, asparagine 227, lysine 228, and glutamate 231 each coordinate 1-deoxy-D-xylulose 5-phosphate. A Mn(2+)-binding site is contributed by glutamate 231.

This sequence belongs to the DXR family. Mg(2+) serves as cofactor. Requires Mn(2+) as cofactor.

It carries out the reaction 2-C-methyl-D-erythritol 4-phosphate + NADP(+) = 1-deoxy-D-xylulose 5-phosphate + NADPH + H(+). It functions in the pathway isoprenoid biosynthesis; isopentenyl diphosphate biosynthesis via DXP pathway; isopentenyl diphosphate from 1-deoxy-D-xylulose 5-phosphate: step 1/6. Its activity is regulated as follows. Inhibited by fosmidomycin. Functionally, catalyzes the NADPH-dependent rearrangement and reduction of 1-deoxy-D-xylulose-5-phosphate (DXP) to 2-C-methyl-D-erythritol 4-phosphate (MEP). The protein is 1-deoxy-D-xylulose 5-phosphate reductoisomerase of Synechococcus sp. (strain ATCC 27144 / PCC 6301 / SAUG 1402/1) (Anacystis nidulans).